Reading from the N-terminus, the 280-residue chain is Phosphatidylserine decarboxylase proenzyme (280 aa).

Residues D88, H144, and S247 each act as charge relay system; for autoendoproteolytic cleavage activity in the active site. The active-site Schiff-base intermediate with substrate; via pyruvic acid; for decarboxylase activity is S247. S247 bears the Pyruvic acid (Ser); by autocatalysis mark.

Belongs to the phosphatidylserine decarboxylase family. PSD-B subfamily. Prokaryotic type I sub-subfamily. Heterodimer of a large membrane-associated beta subunit and a small pyruvoyl-containing alpha subunit. Requires pyruvate as cofactor. In terms of processing, is synthesized initially as an inactive proenzyme. Formation of the active enzyme involves a self-maturation process in which the active site pyruvoyl group is generated from an internal serine residue via an autocatalytic post-translational modification. Two non-identical subunits are generated from the proenzyme in this reaction, and the pyruvate is formed at the N-terminus of the alpha chain, which is derived from the carboxyl end of the proenzyme. The autoendoproteolytic cleavage occurs by a canonical serine protease mechanism, in which the side chain hydroxyl group of the serine supplies its oxygen atom to form the C-terminus of the beta chain, while the remainder of the serine residue undergoes an oxidative deamination to produce ammonia and the pyruvoyl prosthetic group on the alpha chain. During this reaction, the Ser that is part of the protease active site of the proenzyme becomes the pyruvoyl prosthetic group, which constitutes an essential element of the active site of the mature decarboxylase.

It localises to the cell membrane. It carries out the reaction a 1,2-diacyl-sn-glycero-3-phospho-L-serine + H(+) = a 1,2-diacyl-sn-glycero-3-phosphoethanolamine + CO2. It participates in phospholipid metabolism; phosphatidylethanolamine biosynthesis; phosphatidylethanolamine from CDP-diacylglycerol: step 2/2. Catalyzes the formation of phosphatidylethanolamine (PtdEtn) from phosphatidylserine (PtdSer). In Stenotrophomonas maltophilia (strain R551-3), this protein is Phosphatidylserine decarboxylase proenzyme.